Reading from the N-terminus, the 449-residue chain is 3-phosphoshikimate 1-carboxyvinyltransferase (449 aa).

Residues 1–29 (MSHDSVPSPITARAGTPLRGRLRPPGDKS) form a disordered region. Lys28, Ser29, and Arg33 together coordinate 3-phosphoshikimate. Lys28 serves as a coordination point for phosphoenolpyruvate. Phosphoenolpyruvate-binding residues include Gly101 and Arg129. Positions 175, 177, 330, and 357 each coordinate 3-phosphoshikimate. Position 177 (Gln177) interacts with phosphoenolpyruvate. Asp330 functions as the Proton acceptor in the catalytic mechanism. Residues Arg361 and Arg405 each contribute to the phosphoenolpyruvate site.

It belongs to the EPSP synthase family. As to quaternary structure, monomer.

The protein resides in the cytoplasm. It catalyses the reaction 3-phosphoshikimate + phosphoenolpyruvate = 5-O-(1-carboxyvinyl)-3-phosphoshikimate + phosphate. It participates in metabolic intermediate biosynthesis; chorismate biosynthesis; chorismate from D-erythrose 4-phosphate and phosphoenolpyruvate: step 6/7. Catalyzes the transfer of the enolpyruvyl moiety of phosphoenolpyruvate (PEP) to the 5-hydroxyl of shikimate-3-phosphate (S3P) to produce enolpyruvyl shikimate-3-phosphate and inorganic phosphate. The sequence is that of 3-phosphoshikimate 1-carboxyvinyltransferase from Methylobacterium sp. (strain 4-46).